The chain runs to 461 residues: Zinc transporter 6 (461 aa).

Topologically, residues 1-33 are cytoplasmic; that stretch reads MGTIHLFRKPQRSFFGKLLREFRLVAADRRSWK. The chain crosses the membrane as a helical span at residues 34–54; it reads ILLFGVINLICTGFLLMWCSS. The Extracellular segment spans residues 55-64; that stretch reads TNSIALTAYT. A helical transmembrane segment spans residues 65-85; that stretch reads YLTIFDLFSLMTCLISYWVTL. Residues 86–98 are Cytoplasmic-facing; it reads RKPSPVYSFGFER. A helical transmembrane segment spans residues 99-119; the sequence is LEVLAVFASTVLAQLGALFIL. At 120–134 the chain is on the extracellular side; that stretch reads KESAERFLEQPEIHT. Residues 135-155 form a helical membrane-spanning segment; that stretch reads GRLLVGTFVALCFNLFTMLSI. Residues 156-200 lie on the Cytoplasmic side of the membrane; it reads RNKPFAYVSEAASTSWLQEHVADLSRSLCGIIPGLSSIFLPRMNP. A helical membrane pass occupies residues 201-221; it reads FVLIDLAGAFALCITYMLIEI. Residues 222 to 223 are Extracellular-facing; sequence NN. Residues 224–244 form a helical membrane-spanning segment; sequence YFAVDTASAIAIALMTFGTMY. Residues 245-461 are Cytoplasmic-facing; it reads PMSVYSGKVL…TNNRIGQPRP (217 aa). The segment at 371 to 392 is disordered; it reads NPVTSTPAKPSSPPPEFSFNTP.

The protein belongs to the cation diffusion facilitator (CDF) transporter (TC 2.A.4) family. SLC30A subfamily. Heterodimer with SLC30A5; form a functional zinc ion transmembrane transporter. As to expression, expressed in brain; especially in cerebellum, hippocampus, parahippocampal gyrus, superior and middle temporal gyrus. Also expressed in B-cells, colon, eye, and lung. Lower expression was present in bone, brain, cervix, ear, heart, kidney, muscle, nerve, pancreas, prostate, skin, stomach, and testis.

Its subcellular location is the golgi apparatus. The protein localises to the trans-Golgi network membrane. Has probably no intrinsic transporter activity but together with SLC30A5 forms a functional zinc ion:proton antiporter heterodimer, mediating zinc entry into the lumen of organelles along the secretory pathway. As part of that zinc ion:proton antiporter, contributes to zinc ion homeostasis within the early secretory pathway and regulates the activation and folding of enzymes like alkaline phosphatases and enzymes involved in phosphatidylinositol glycan anchor biosynthesis. The sequence is that of Zinc transporter 6 from Homo sapiens (Human).